The sequence spans 199 residues: Neurotrophic factor BDNF precursor form (199 aa).

The interval 1–23 (GQGSLAYPGLRTQGNLETLSGPN) is disordered. Residues 1–100 (GQGSLAYPGL…AANMSMRVRR (100 aa)) constitute a propeptide that is removed on maturation. Residues 12–23 (TQGNLETLSGPN) show a composition bias toward polar residues. An N-linked (GlcNAc...) asparagine glycan is attached at Asn93. The cysteines at positions 113 and 180 are disulfide-linked.

The protein belongs to the NGF-beta family.

Its subcellular location is the secreted. Functionally, promotes the survival of neuronal populations that are all located either in the central nervous system or directly connected to it. In Eunectes notaeus (Yellow anaconda), this protein is Neurotrophic factor BDNF precursor form (BDNF).